The chain runs to 546 residues: MSKDPGRILIFDTTLRDGEQSPGASLNLEEKLAIAHQLARLGVDVIEAGFPFASPGDFKAVNKIANAVGKENGPIICGLARASKGDIKACYEAVSPAPKKRIHTFIATSDIHLKHKLKKSRKDVLQIVPEMVNYAKSLVDDIEFSCEDASRSDPDFLYEVIQLAISAGATTINIPDTVGFTTPSEFGNLIADINKNVPNINEAVISVHGHNDLGLAVANFLEAVKNGARQLECTINGIGERAGNASLEELVMALHVRKSFFNSFFKRNPDSPTPLTAIRTEEITKTSRLVSNLTGMTVQPNKAIVGANAFAHESGIHQDGVLKNRLTYEIIDAKTVGLSDNKISLGKLSGRSAVRARLEEMGYDLSREDLNDAFARFKDLADRKREITDRDLEAIVSEQVQLPEAKFQLSLVQVSCGNASKPTATISLLNTEDNTEDTAVSIGTGPVDAVCEALNKLAKVPNELIEFSVKSVTEGIDALGEVTIRIRRDNKIYSGHSADTDVVVAAANAYVNALNRLVFSEKKNSIHPQFDSLENSTNTFLSNNAN.

A Pyruvate carboxyltransferase domain is found at 8 to 271; it reads ILIFDTTLRD…NSFFKRNPDS (264 aa). Asp17, His208, His210, and Asn244 together coordinate Mn(2+). Residues 408–546 are regulatory domain; sequence QLSLVQVSCG…TNTFLSNNAN (139 aa).

It belongs to the alpha-IPM synthase/homocitrate synthase family. LeuA type 1 subfamily. Homodimer. Mn(2+) is required as a cofactor.

Its subcellular location is the cytoplasm. It carries out the reaction 3-methyl-2-oxobutanoate + acetyl-CoA + H2O = (2S)-2-isopropylmalate + CoA + H(+). Its pathway is amino-acid biosynthesis; L-leucine biosynthesis; L-leucine from 3-methyl-2-oxobutanoate: step 1/4. Catalyzes the condensation of the acetyl group of acetyl-CoA with 3-methyl-2-oxobutanoate (2-ketoisovalerate) to form 3-carboxy-3-hydroxy-4-methylpentanoate (2-isopropylmalate). This is 2-isopropylmalate synthase from Prochlorococcus marinus (strain AS9601).